Here is a 223-residue protein sequence, read N- to C-terminus: Protein UGX2 (223 aa).

Basic residues predominate over residues Ser78–Lys95. Positions Ser78 to Tyr117 are disordered. The span at Gln96 to Arg105 shows a compositional bias: basic and acidic residues.

The protein is Protein UGX2 (UGX2) of Saccharomyces cerevisiae (strain ATCC 204508 / S288c) (Baker's yeast).